The primary structure comprises 621 residues: Replication factor A protein 1 (621 aa).

Ser-2 is modified (N-acetylserine). Ser-178 carries the post-translational modification Phosphoserine; by ATM or ATR. The segment at residues 197–284 (WTIKARVSYK…PYELNLDRDT (88 aa)) is a DNA-binding region (OB). The C4-type zinc-finger motif lies at 486–508 (CSNENCNKKVLEQPDGTWRCEKC).

Belongs to the replication factor A protein 1 family. Component of the heterotrimeric canonical replication protein A complex (RPA). Interacts with POB3. The N-terminus is blocked.

It localises to the nucleus. Its function is as follows. As part of the replication protein A (RPA/RP-A), a single-stranded DNA-binding heterotrimeric complex, may play an essential role in DNA replication, recombination and repair. Binds and stabilizes single-stranded DNA intermediates, preventing complementary DNA reannealing and recruiting different proteins involved in DNA metabolism. Binds to single-stranded sequences participating in DNA replication in addition to those mediating transcriptional repression (URS1) and activation (CAR1). Stimulates the activity of a cognate strand exchange protein (SEP1). It cooperates with T-AG and DNA topoisomerase I to unwind template DNA containing the simian virus 40 origin of DNA replication. The sequence is that of Replication factor A protein 1 (RFA1) from Saccharomyces cerevisiae (strain ATCC 204508 / S288c) (Baker's yeast).